Here is a 172-residue protein sequence, read N- to C-terminus: Disulfide bond formation protein B (172 aa).

The Cytoplasmic portion of the chain corresponds to 1-11; the sequence is MNPFRWGFRAQ. The chain crosses the membrane as a helical span at residues 12-28; sequence FLLGFLACAGLLAYAIY. Residues 29 to 46 are Periplasmic-facing; it reads VQLHLGLEPCPLCIFQRI. A disulfide bridge connects residues cysteine 38 and cysteine 41. A helical transmembrane segment spans residues 47–63; sequence AFATLALLFLLGALHGP. Residues 64–70 lie on the Cytoplasmic side of the membrane; it reads RGAGGRK. The chain crosses the membrane as a helical span at residues 71–88; that stretch reads AYGVLAFIAAGVGMGIAA. At 89–145 the chain is on the periplasmic side; sequence RHVWVQIRPKDMMSSCGPPLSFLSETMGPFEVFRTVLTGTGDCGNIDWRFLGLSMPM. The cysteines at positions 104 and 131 are disulfide-linked. Residues 146–164 traverse the membrane as a helical segment; sequence WSMVWFVGLALWALYAGFK. At 165–172 the chain is on the cytoplasmic side; the sequence is HRGPRKLF.

The protein belongs to the DsbB family.

The protein localises to the cell inner membrane. Functionally, required for disulfide bond formation in some periplasmic proteins. Acts by oxidizing the DsbA protein. The protein is Disulfide bond formation protein B of Xanthomonas campestris pv. campestris (strain 8004).